The sequence spans 326 residues: Transmembrane protein PVRIG (326 aa).

3 helical membrane passes run 26 to 46 (LVLP…EVWV), 62 to 78 (CGFL…VSWG), and 172 to 192 (LAGI…LLHL). A Phosphotyrosine modification is found at tyrosine 233. Positions 296-326 (AGERPPHTGPGLTLFPDPRGPRAMEGPLGVR) are disordered.

Interacts with NECTIN2, hence competing with CD226. In terms of tissue distribution, expressed in some types of immune cells. Expressed at low levels on the surface of freshly isolated T-cells and natural killer (NK) cells, predominantly on CD8+ T-cells (mainly memory/effector, but not naive cells) and on both CD16+ and CD16- NK cells. T-cell expression levels are variable among individuals. Not detected in B-cells, naive or helper T-cells, monocytes, nor neutrophils (at protein level). Not detected in dendritic cells.

It localises to the cell membrane. Cell surface receptor for NECTIN2. May act as a coinhibitory receptor that suppresses T-cell receptor-mediated signals. Following interaction with NECTIN2, inhibits T-cell proliferation. Competes with CD226 for NECTIN2-binding. The polypeptide is Transmembrane protein PVRIG (PVRIG) (Homo sapiens (Human)).